A 583-amino-acid chain; its full sequence is Proline--tRNA ligase (583 aa).

Belongs to the class-II aminoacyl-tRNA synthetase family. ProS type 1 subfamily. In terms of assembly, homodimer.

The protein resides in the cytoplasm. It carries out the reaction tRNA(Pro) + L-proline + ATP = L-prolyl-tRNA(Pro) + AMP + diphosphate. Its function is as follows. Catalyzes the attachment of proline to tRNA(Pro) in a two-step reaction: proline is first activated by ATP to form Pro-AMP and then transferred to the acceptor end of tRNA(Pro). As ProRS can inadvertently accommodate and process non-cognate amino acids such as alanine and cysteine, to avoid such errors it has two additional distinct editing activities against alanine. One activity is designated as 'pretransfer' editing and involves the tRNA(Pro)-independent hydrolysis of activated Ala-AMP. The other activity is designated 'posttransfer' editing and involves deacylation of mischarged Ala-tRNA(Pro). The misacylated Cys-tRNA(Pro) is not edited by ProRS. The protein is Proline--tRNA ligase of Aromatoleum aromaticum (strain DSM 19018 / LMG 30748 / EbN1) (Azoarcus sp. (strain EbN1)).